The chain runs to 272 residues: Type III pantothenate kinase (272 aa).

Residue Asp-6–Val-13 coordinates ATP. Gly-109–Arg-112 contacts substrate. The active-site Proton acceptor is the Asp-111. Position 131 (Asp-131) interacts with K(+). Ser-134 provides a ligand contact to ATP. Position 186 (Thr-186) interacts with substrate.

It belongs to the type III pantothenate kinase family. Homodimer. Requires NH4(+) as cofactor. K(+) is required as a cofactor.

The protein resides in the cytoplasm. The enzyme catalyses (R)-pantothenate + ATP = (R)-4'-phosphopantothenate + ADP + H(+). It functions in the pathway cofactor biosynthesis; coenzyme A biosynthesis; CoA from (R)-pantothenate: step 1/5. In terms of biological role, catalyzes the phosphorylation of pantothenate (Pan), the first step in CoA biosynthesis. The sequence is that of Type III pantothenate kinase from Mycobacterium bovis (strain BCG / Pasteur 1173P2).